Reading from the N-terminus, the 589-residue chain is Parathyroid hormone/parathyroid hormone-related peptide receptor (589 aa).

A signal peptide spans 1–28; sequence MGAARIAPGLALLLCCPVLSSAYALVDA. Over 29–188 the chain is Extracellular; it reads DDVMTKEEQI…REREVFDRLG (160 aa). 3 cysteine pairs are disulfide-bonded: Cys-48–Cys-117, Cys-108–Cys-148, and Cys-131–Cys-170. The segment at 64–105 is disordered; it reads ESDKGWASASTSGKPKKEKPSGKLHPESEEDKEVPTGSRPRG. Positions 81–90 are enriched in basic and acidic residues; it reads EKPSGKLHPE. N-linked (GlcNAc...) asparagine glycosylation is found at Asn-151, Asn-161, Asn-166, and Asn-176. The chain crosses the membrane as a helical span at residues 189-209; it reads MIYTVGYSVSLASLTVAVLIL. Residues 210-223 lie on the Cytoplasmic side of the membrane; it reads AYFRRLHCTRNYIH. A helical transmembrane segment spans residues 224 to 244; the sequence is MHLFLSFMLRAVSIFVKDAVL. The Extracellular portion of the chain corresponds to 245–294; the sequence is YSGTALDEAERLTEEELRAIAQAPPPPAAAAGYVGCRVAVTFFLYFLATN. A helical transmembrane segment spans residues 295-315; it reads YYWILVEGLYLHSLIFMAFFS. At 316-318 the chain is on the cytoplasmic side; that stretch reads EKK. A helical membrane pass occupies residues 319-339; it reads YLWGFTVFGWGLPAIFVAVWV. The Extracellular portion of the chain corresponds to 340-360; that stretch reads SVRATLANTGCWDLSSGNKKW. A helical transmembrane segment spans residues 361-381; that stretch reads IIQVPILASIVLNFILFINIV. At 382-404 the chain is on the cytoplasmic side; sequence RVLATKLRETNAGRCDTRQQYRK. A helical membrane pass occupies residues 405–425; that stretch reads LLKSTLVLMPLFGVHYIVFMA. Residues 426 to 439 are Extracellular-facing; the sequence is TPYTEVSGTLWQVQ. A helical membrane pass occupies residues 440-460; that stretch reads MHYEMLFNSFQGFFVAIIYCF. At 461-589 the chain is on the cytoplasmic side; the sequence is CNGEVQAEIK…LLQEEWETVM (129 aa). The Important for interaction with G proteins motif lies at 473-476; sequence WSRW. The interval 524–549 is disordered; that stretch reads AATTNGHPPLPGHTKSGSPALQATPP. At Thr-547 the chain carries Phosphothreonine.

Belongs to the G-protein coupled receptor 2 family. In terms of assembly, homodimer in the absence of bound ligand. Peptide hormone binding leads to dissociation of the homodimer. In terms of processing, N-glycosylated.

It is found in the cell membrane. Functionally, G-protein-coupled receptor for parathyroid hormone (PTH) and for parathyroid hormone-related peptide (PTHLH). Ligand binding causes a conformation change that triggers signaling via guanine nucleotide-binding proteins (G proteins) and modulates the activity of downstream effectors, such as adenylate cyclase (cAMP). PTH1R is coupled to G(s) G alpha proteins and mediates activation of adenylate cyclase activity. PTHLH dissociates from PTH1R more rapidly than PTH; as consequence, the cAMP response induced by PTHLH decays faster than the response induced by PTH. This chain is Parathyroid hormone/parathyroid hormone-related peptide receptor (PTH1R), found in Bos taurus (Bovine).